A 212-amino-acid chain; its full sequence is Peptide methionine sulfoxide reductase MsrA (212 aa).

Residue Cys52 is part of the active site.

Belongs to the MsrA Met sulfoxide reductase family.

The enzyme catalyses L-methionyl-[protein] + [thioredoxin]-disulfide + H2O = L-methionyl-(S)-S-oxide-[protein] + [thioredoxin]-dithiol. The catalysed reaction is [thioredoxin]-disulfide + L-methionine + H2O = L-methionine (S)-S-oxide + [thioredoxin]-dithiol. Its function is as follows. Has an important function as a repair enzyme for proteins that have been inactivated by oxidation. Catalyzes the reversible oxidation-reduction of methionine sulfoxide in proteins to methionine. The sequence is that of Peptide methionine sulfoxide reductase MsrA from Salmonella schwarzengrund (strain CVM19633).